The sequence spans 675 residues: PTS system glucose-specific EIICBA component (675 aa).

Positions 3-414 (KKFFGQLQRI…FNFKTPGRED (412 aa)) constitute a PTS EIIC type-1 domain. 11 helical membrane passes run 16 to 36 (LMLP…GNAF), 63 to 83 (AGGI…AIGL), 89 to 109 (VAAI…GMFL), 126 to 146 (VLGI…GALA), 170 to 190 (FVPI…AIIW), 199 to 219 (AFSE…FGFI), 273 to 293 (FMQG…LAIY), 303 to 323 (VVAG…ITEP), 329 to 349 (LFVA…SFLI), 355 to 375 (LHLG…GILP), and 383 to 403 (VIPV…FLIV). The PTS EIIB type-1 domain maps to 425-506 (SELPFKVLDA…QQIMDGKITS (82 aa)). The active-site Phosphocysteine intermediate; for EIIB activity is the cysteine 447. The PTS EIIA type-1 domain occupies 547–651 (DKVFSEKMMG…STITPIVVTN (105 aa)). The Tele-phosphohistidine intermediate; for EIIA activity role is filled by histidine 599.

It is found in the cell membrane. It carries out the reaction N(pros)-phospho-L-histidyl-[protein] + D-glucose(out) = D-glucose 6-phosphate(in) + L-histidyl-[protein]. With respect to regulation, inhibited by 2-deoxyglucose and methyl beta-D-glucoside, but not by methyl alpha-D-glucoside, p-nitrophenyl alpha-D-glucoside, o-nitrophenyl beta-D-glucoside and salicin. Functionally, the phosphoenolpyruvate-dependent sugar phosphotransferase system (sugar PTS), a major carbohydrate active transport system, catalyzes the phosphorylation of incoming sugar substrates concomitantly with their translocation across the cell membrane. This system is involved in glucose transport. Cannot transport galactose, fructose, mannose, cellobiose, sucrose, maltose, lactose, melibiose and trehalose, as well as N-acetylglucosamine. This is PTS system glucose-specific EIICBA component (ptsG) from Staphylococcus carnosus (strain TM300).